We begin with the raw amino-acid sequence, 1012 residues long: Structural polyprotein (1012 aa).

Position 30 (aspartate 30) interacts with a divalent metal cation. Positions 513-755 (ADKGYEVVAN…AGRQYHLAMA (243 aa)) constitute a Peptidase S50 domain. Serine 652 acts as the Nucleophile in catalysis. Lysine 692 is an active-site residue. The interval 970-1012 (MEMKHRNPRRALPKPKPKPNAPTQRPPGRLGRWIRTVSDEDLE) is disordered. Positions 975–986 (RNPRRALPKPKP) are enriched in basic residues. Residues 1003-1012 (IRTVSDEDLE) form an interaction with VP1 protein region.

As to quaternary structure, homotrimer. A central divalent metal stabilizes the VP2 trimer. Interacts with host ITGA4/ITGB1. Homodimer. Interacts (via C-terminus) with VP1 in the cytoplasm. Interacts with VP2. In terms of processing, specific enzymatic cleavages yield mature proteins. The capsid assembly seems to be regulated by polyprotein processing. The protease VP4 cleaves itself off the polyprotein, thus releasing pre-VP2 and VP3 within the infected cell. During capsid assembly, the C-terminus of pre-VP2 is further processed by VP4, giving rise to VP2, the external capsid protein and three small peptides that all stay closely associated with the capsid.

The protein localises to the virion. The protein resides in the host cytoplasm. In terms of biological role, capsid protein VP2 self assembles to form an icosahedral capsid with a T=13 symmetry, about 70 nm in diameter, and consisting of 260 VP2 trimers. The capsid encapsulates the genomic dsRNA. VP2 is also involved in attachment and entry into the host cell by interacting with host ITGA4/ITGB1. Its function is as follows. The precursor of VP2 plays an important role in capsid assembly. First, pre-VP2 and VP2 oligomers assemble to form a procapsid. Then, the pre-VP2 intermediates may be processed into VP2 proteins by proteolytic cleavage mediated by VP4 to obtain the mature virion. The final capsid is composed of pentamers and hexamers but VP2 has a natural tendency to assemble into all-pentameric structures. Therefore pre-VP2 may be required to allow formation of the hexameric structures. Functionally, protease VP4 is a serine protease that cleaves the polyprotein into its final products. Pre-VP2 is first partially cleaved, and may be completely processed by VP4 upon capsid maturation. Capsid protein VP3 plays a key role in virion assembly by providing a scaffold for the capsid made of VP2. May self-assemble to form a T=4-like icosahedral inner-capsid composed of at least 180 trimers. Plays a role in genomic RNA packaging by recruiting VP1 into the capsid and interacting with the dsRNA genome segments to form a ribonucleoprotein complex. Additionally, the interaction of the VP3 C-terminal tail with VP1 removes the inherent structural blockade of the polymerase active site. Thus, VP3 can also function as a transcriptional activator. In terms of biological role, structural peptide 1 is a small peptide derived from pre-VP2 C-terminus. It destabilizes and perforates cell membranes, suggesting a role during entry. Its function is as follows. Structural peptide 2 is a small peptide derived from pVP2 C-terminus. It is not essential for the virus viability, but viral growth is affected when missing. Functionally, structural peptide 3 is a small peptide derived from pVP2 C-terminus. It is not essential for the virus viability, but viral growth is affected when missing. Structural peptide 4 is a small peptide derived from pVP2 C-terminus. It is essential for the virus viability. The chain is Structural polyprotein from Avian infectious bursal disease virus (strain Chicken/Cuba/Soroa/1998) (IBDV).